A 405-amino-acid chain; its full sequence is Envelope glycoprotein M (405 aa).

The Intravirion portion of the chain corresponds to 1 to 17 (MKSSKNDTFVYRTWVKT). The helical transmembrane segment at 18 to 38 (LVVYFVMFVMSAVVPITAMFP) threads the bilayer. The Virion surface portion of the chain corresponds to 39 to 76 (NLGYPCYFNALVDYGALNLTNYNLAHHLTPTLYLEPPE). A helical transmembrane segment spans residues 77 to 97 (MFVYITLVFIADCVAFIYYAC). Residues 98 to 121 (GEVALIKARKKVSGLTDLSAWVSA) lie on the Intravirion side of the membrane. A helical membrane pass occupies residues 122–142 (VGSPTVLFLAILKLWSIQVFI). Residues 143 to 149 (QVLSYKH) lie on the Virion surface side of the membrane. The chain crosses the membrane as a helical span at residues 150 to 170 (VFLSAFVYFLHFLASVLHACA). Over 171–192 (CVTRFSPVWVVKAQDNSIPQDT) the chain is Intravirion. The helical transmembrane segment at 193–215 (FLWWVVFYLKPVVTNLYLGCLAL) threads the bilayer. Residues 216 to 245 (ETLVFSLSVFLALGNSFYFMVGDMVLGAVN) are Virion surface-facing. Residues 246 to 266 (LFLILPIFWYILTEVWLASFM) form a helical membrane-spanning segment. Position 267 (Arg267) is a topological domain, intravirion. A helical transmembrane segment spans residues 268-288 (HNFGFYCGMFIASIILILPLV). At 289–299 (RYEAVFVSAKL) the chain is on the virion surface side. Residues 300 to 320 (HTTVAINVAIIPILCSVAMLI) form a helical membrane-spanning segment. Topologically, residues 321–405 (RICRIFKSMR…TTDSEEEIFP (85 aa)) are intravirion. The tract at residues 346 to 405 (LESEPRPRPSRTPSPGRNRRRSSTSSSSSRSTRRQRPVSTQALVSSVLPMTTDSEEEIFP) is disordered. Positions 386-397 (QALVSSVLPMTT) are enriched in polar residues.

It belongs to the herpesviridae glycoprotein M family. As to quaternary structure, interacts (via N-terminus) with gN (via N-terminus). The gM-gN heterodimer forms the gCII complex.

It is found in the virion membrane. It localises to the host Golgi apparatus. Its subcellular location is the host trans-Golgi network. The protein localises to the host endosome membrane. The protein resides in the host nucleus inner membrane. Functionally, envelope glycoprotein important for virion assembly and egress. Plays a role in the correct incorporation of gH-gL into virion membrane. Directs the glycoprotein N (gN) to the host trans-Golgi network. This chain is Envelope glycoprotein M, found in Epstein-Barr virus (strain GD1) (HHV-4).